Consider the following 362-residue polypeptide: 3-isopropylmalate dehydrogenase (362 aa).

Residues Arg97, Arg107, Arg135, and Asp225 each contribute to the substrate site. Mg(2+)-binding residues include Asp225, Asp249, and Asp253. 283-295 (GSAPDIAHKNLAN) contacts NAD(+).

The protein belongs to the isocitrate and isopropylmalate dehydrogenases family. LeuB type 1 subfamily. As to quaternary structure, homodimer. It depends on Mg(2+) as a cofactor. Mn(2+) is required as a cofactor.

The protein resides in the cytoplasm. The enzyme catalyses (2R,3S)-3-isopropylmalate + NAD(+) = 4-methyl-2-oxopentanoate + CO2 + NADH. Its pathway is amino-acid biosynthesis; L-leucine biosynthesis; L-leucine from 3-methyl-2-oxobutanoate: step 3/4. Catalyzes the oxidation of 3-carboxy-2-hydroxy-4-methylpentanoate (3-isopropylmalate) to 3-carboxy-4-methyl-2-oxopentanoate. The product decarboxylates to 4-methyl-2 oxopentanoate. The chain is 3-isopropylmalate dehydrogenase from Prochlorococcus marinus (strain SARG / CCMP1375 / SS120).